The following is a 684-amino-acid chain: MACLGFLLPVGFLLLISTVAGGKYGVAHVVSENWSKDYCILFSSDYITLPRDLHHAPLLPLYDGTKAPWCPGEDSPHQAQLRSPSQRPLRQTTAMVMRGNCSFHTKGWLAQGQGAHGLLIVSRVSDQQCSDTTLAPQDPRQPLADLTIPVAMLHYADMLDILSHTRGEAVVRVAMYAPPEPIIDYNMLVIFILAVGTVAAGGYWAGLTEANRLQRRRARRGGGSGGHHQLQEAAAAEGAQKEDNEDIPVDFTPAMTGVVVTLSCSLMLLLYFFYDHFVYVTIGIFGLGAGIGLYSCLSPLVCRLSLRQYQRPPHSLWASLPLPLLLLASLCATVIIFWVAYRNEDRWAWLLQDTLGISYCLFVLHRVRLPTLKNCSSFLLALLAFDVFFVFVTPFFTKTGESIMAQVALGPAESSSHERLPMVLKVPRLRVSALTLCSQPFSILGFGDIVVPGFLVAYCCRFDVQVCSRQIYFVACTVAYAVGLLVTFMAMVLMQMGQPALLYLVSSTLLTSLAVAACRQELSLFWTGQGRAKMCGLGCAPSAGSRQKQEGAADAHTASTLERGTSRGAGDLDSNPGEDTTEIVTISENEATNPEDRSDSSEGWSDAHLDPNELPFIPPGASEELMPLMPMAMLIPLMPLMPPPSELGHVHAQAQAHETGLPWAGLHKRKGLKVRKSMSTQAPL.

The first 21 residues, 1–21, serve as a signal peptide directing secretion; that stretch reads MACLGFLLPVGFLLLISTVAG. Residues 22–186 are Lumenal-facing; sequence GKYGVAHVVS…APPEPIIDYN (165 aa). The PA domain maps to 83–163; that stretch reads SPSQRPLRQT…HYADMLDILS (81 aa). Asn100 is a glycosylation site (N-linked (GlcNAc...) asparagine). The chain crosses the membrane as a helical span at residues 187-207; it reads MLVIFILAVGTVAAGGYWAGL. The Cytoplasmic portion of the chain corresponds to 208–253; it reads TEANRLQRRRARRGGGSGGHHQLQEAAAAEGAQKEDNEDIPVDFTP. A disordered region spans residues 216–242; that stretch reads RRARRGGGSGGHHQLQEAAAAEGAQKE. Residues 227-238 are compositionally biased toward low complexity; the sequence is HHQLQEAAAAEG. Residues 254-274 traverse the membrane as a helical segment; sequence AMTGVVVTLSCSLMLLLYFFY. The Lumenal portion of the chain corresponds to 275–276; the sequence is DH. Residues 277–297 traverse the membrane as a helical segment; that stretch reads FVYVTIGIFGLGAGIGLYSCL. Topologically, residues 298–319 are cytoplasmic; the sequence is SPLVCRLSLRQYQRPPHSLWAS. Residues 320-340 traverse the membrane as a helical segment; sequence LPLPLLLLASLCATVIIFWVA. Residues 341 to 346 are Lumenal-facing; the sequence is YRNEDR. A helical transmembrane segment spans residues 347 to 365; the sequence is WAWLLQDTLGISYCLFVLH. Over 366 to 376 the chain is Cytoplasmic; that stretch reads RVRLPTLKNCS. A helical membrane pass occupies residues 377-397; the sequence is SFLLALLAFDVFFVFVTPFFT. Residue Asp386 is part of the active site. The Lumenal portion of the chain corresponds to 398–439; the sequence is KTGESIMAQVALGPAESSSHERLPMVLKVPRLRVSALTLCSQ. Residues 440-460 traverse the membrane as a helical segment; sequence PFSILGFGDIVVPGFLVAYCC. Asp448 is a catalytic residue. Residues 461 to 472 are Cytoplasmic-facing; the sequence is RFDVQVCSRQIY. Residues 473–493 traverse the membrane as a helical segment; that stretch reads FVACTVAYAVGLLVTFMAMVL. The Lumenal segment spans residues 494 to 495; sequence MQ. A helical membrane pass occupies residues 496–516; the sequence is MGQPALLYLVSSTLLTSLAVA. The PAL signature appears at 499–501; that stretch reads PAL. Over 517–684 the chain is Cytoplasmic; the sequence is ACRQELSLFW…RKSMSTQAPL (168 aa). The interval 548–614 is disordered; it reads KQEGAADAHT…SDAHLDPNEL (67 aa). Residues 582–592 are compositionally biased toward polar residues; the sequence is EIVTISENEAT. The segment covering 594-611 has biased composition (basic and acidic residues); the sequence is PEDRSDSSEGWSDAHLDP.

This sequence belongs to the peptidase A22B family. In terms of assembly, interacts (via active sites) with FREY; the interaction stabilizes FREY1 protein and inhibits SPPL2C proteolytic activity. In terms of processing, glycosylated. As to expression, highly expressed in testis where it is primarily localised in spermatids (at protein level).

It localises to the endoplasmic reticulum membrane. Functionally, sperm-specific intramembrane-cleaving aspartic protease (I-CLiP) that cleaves distinct tail-anchored proteins and SNARE proteins. In elongated spermatids, modulates intracellular Ca(2+) homeostasis by controlling PLN abundance through proteolytic cleavage. During spermatogenesis, processes SNARE proteins and impacts vesicular trafficking which supports compartmental reorganization in maturating spermatids and may play a role in formation of the acrosome. In round spermatids, acts as a scaffold protein supporting FREY1 in IZUMO1 recruitment at the endoplasmic reticulum membrane and coordination of IZUMO1 complex assembly. Stabilizes FREY1 at the endoplasmic reticulum membrane through interaction. May recruit IZUMO1 interaction partners. In Homo sapiens (Human), this protein is Signal peptide peptidase-like 2C.